A 458-amino-acid polypeptide reads, in one-letter code: Alpha-glucosides-binding periplasmic protein AglE (458 aa).

The N-terminal stretch at 1 to 27 (MKRSLLIGVAAFALLAGTAGLAGTAGA) is a signal peptide.

The protein belongs to the bacterial solute-binding protein 1 family.

The protein localises to the periplasm. In terms of biological role, part of the binding-protein-dependent transport system for alpha-glucosides such as sucrose, maltose and trehalose. The polypeptide is Alpha-glucosides-binding periplasmic protein AglE (aglE) (Rhizobium meliloti (strain 1021) (Ensifer meliloti)).